We begin with the raw amino-acid sequence, 270 residues long: Cyclase-like protein 3 (270 aa).

Residues 1–23 (MMAHLAPLFLLLLLLLLPLHAAA) form the signal peptide.

The protein belongs to the Cyclase 1 superfamily. Highly expressed in leaf sheaths. leaf collars and flag leaves. Expressed in roots, stems, glumes, young panicles and pistils.

The protein localises to the secreted. It localises to the extracellular space. Its subcellular location is the extracellular matrix. May be involved in response to stresses. This Oryza sativa subsp. japonica (Rice) protein is Cyclase-like protein 3.